Reading from the N-terminus, the 507-residue chain is Arabinose import ATP-binding protein AraG (507 aa).

ABC transporter domains lie at 14 to 249 (LRFN…MVGR) and 249 to 505 (RDIQ…LPRT). 46-53 (GENGAGKS) is an ATP binding site.

Belongs to the ABC transporter superfamily. Arabinose importer (TC 3.A.1.2.2) family. As to quaternary structure, the complex is composed of two ATP-binding proteins (AraG), two transmembrane proteins (AraH) and a solute-binding protein (AraF).

It localises to the cell inner membrane. It catalyses the reaction L-arabinose(out) + ATP + H2O = L-arabinose(in) + ADP + phosphate + H(+). Part of the ABC transporter complex AraFGH involved in arabinose import. Responsible for energy coupling to the transport system. The sequence is that of Arabinose import ATP-binding protein AraG from Pseudomonas savastanoi pv. phaseolicola (strain 1448A / Race 6) (Pseudomonas syringae pv. phaseolicola (strain 1448A / Race 6)).